We begin with the raw amino-acid sequence, 194 residues long: Putative manganese efflux pump MntP (194 aa).

6 helical membrane passes run Pro-3–Gly-23, Leu-37–Leu-57, Ile-65–Ile-85, Leu-112–Phe-132, Ile-137–Met-157, and Ala-170–Leu-190.

This sequence belongs to the MntP (TC 9.B.29) family.

It is found in the cell inner membrane. Functionally, probably functions as a manganese efflux pump. The protein is Putative manganese efflux pump MntP of Xylella fastidiosa (strain M12).